The sequence spans 553 residues: Cysteine desulfurase IscS (553 aa).

Low complexity predominate over residues 102-122 (NNISSNNTQYNNNSSNSGSLN). The segment at 102-125 (NNISSNNTQYNNNSSNSGSLNDEG) is disordered.

It belongs to the class-V pyridoxal-phosphate-dependent aminotransferase family. NifS/IscS subfamily. As to quaternary structure, homotetramer. Interacts with Isd11; the interaction enhances cysteine desulfurase activity of IscS. Interacts with IscU. Component of a complex, at least composed of IscS, Isd11 and IscU. Requires pyridoxal 5'-phosphate as cofactor.

The protein resides in the mitochondrion. It carries out the reaction (sulfur carrier)-H + L-cysteine = (sulfur carrier)-SH + L-alanine. Its pathway is cofactor biosynthesis; iron-sulfur cluster biosynthesis. Functionally, catalyzes sulfur activation and mobilization in iron-sulfur cluster formation (ISC) pathway for iron-sulfur (Fe-S) cluster biogenesis. Active when in complex with a partner protein Isd11. The sequence is that of Cysteine desulfurase IscS from Plasmodium falciparum (isolate 3D7).